The following is a 756-amino-acid chain: MTNEGRFKAKGFVRTSSTTRPIQALSFHMIGILLQCVLFISVLSIAVSEALCNSQDRESLLWFSGNVSSSVSPLNWNPSIDCCSWEGITCDDSPDSHITAISLPFRALYGKLPLSVLRLHHLSQLNLSHNRLSGHLPSGFLSALDQLKVLDLSYNSLDGELPVEQTFRNGSNRCFPIRIVDLSSNFLQGEILPSSIFMQGTFDLISFNVSKNSFTGSIPSFMCKSSPQLSKLDFSYNDFTGNIPQGLGRCLKLSVLQAGFNNISGEIPSDIYNLSELEQLFLPVNHLSGKINDDITHLTKLKSLELYSNHLGGEIPMDIGQLSRLQSLQLHINNITGTVPPSLANCTNLVKLNLRLNRLEGTLSELDFSRFQSLSILDLGNNSFSGDFPWRVHSCKSLSAMRFASNKLTGQISPHVLELESLSILSLSDNKLMNITGALGILQGCRNLSTLLIGKNFYNETFPSDKDLISSDGFPNLQIFASGGSGLRGEIPAWLIKLKSLAVIDLSHNQLVGSIPGWLGTFPHLFYIDLSENLLSGELPKDLFQLKALMSQKAYDATERNYLKLPVFVSPNNVTTHQQYNQLFSLPPGIYIRRNNLKGSIPIEVGQLKVLHVLELSHNYLSGIIPHELSKLTSLERLDLSNNHLSGRIPWSLTSLHYMSYFNVVNNSLDGPIPTGSQFDTFPQANFKGNPLLCGGILLTSCKASTKLPATTTNKADTEDEEELKFIFILGVATGFFVSYCFYWCFFARLDAFISK.

The first 50 residues, 1–50 (MTNEGRFKAKGFVRTSSTTRPIQALSFHMIGILLQCVLFISVLSIAVSEA), serve as a signal peptide directing secretion. Residues 51–88 (LCNSQDRESLLWFSGNVSSSVSPLNWNPSIDCCSWEGI) are N-cap. Residues 51–725 (LCNSQDRESL…ADTEDEEELK (675 aa)) lie on the Extracellular side of the membrane. The N-linked (GlcNAc...) asparagine glycan is linked to Asn-66. 18 LRR repeats span residues 95-119 (DSHI…VLRL), 120-143 (HHLS…FLSA), 145-169 (DQLK…TFRN), 174-199 (CFPI…IFMQ), 201-225 (TFDL…MCKS), 226-250 (SPQL…LGRC), 252-274 (KLSV…IYNL), 275-298 (SELE…ITHL), 299-322 (TKLK…IGQL), 323-346 (SRLQ…LANC), 348-370 (NLVK…DFSR), 371-395 (FQSL…VHSC), 397-419 (SLSA…VLEL), 420-443 (ESLS…GILQ), 445-471 (CRNL…LISS), 474-498 (FPNL…LIKL), 499-521 (KSLA…WLGT), and 522-546 (FPHL…LFQL). Residues Asn-126 and Asn-169 are each glycosylated (N-linked (GlcNAc...) asparagine). Residue Asn-208 is glycosylated (N-linked (GlcNAc...) asparagine). 2 N-linked (GlcNAc...) asparagine glycosylation sites follow: Asn-262 and Asn-273. Residues Asn-334 and Asn-345 are each glycosylated (N-linked (GlcNAc...) asparagine). Asn-381 is a glycosylation site (N-linked (GlcNAc...) asparagine). N-linked (GlcNAc...) asparagine glycans are attached at residues Asn-434, Asn-447, and Asn-459. The LRR 19; degenerate repeat unit spans residues 548–569 (ALMSQKAYDATERNYLKLPVFV). LRR repeat units follow at residues 570 to 593 (SPNN…IYIR), 608 to 631 (LKVL…ELSK), 632 to 656 (LTSL…LTSL), and 658 to 681 (YMSY…QFDT). Residue Asn-573 is glycosylated (N-linked (GlcNAc...) asparagine). The N-linked (GlcNAc...) asparagine glycan is linked to Asn-666. The tract at residues 699–725 (LTSCKASTKLPATTTNKADTEDEEELK) is C-cap/acidic domain. Residues 726–746 (FIFILGVATGFFVSYCFYWCF) form a helical membrane-spanning segment. Over 747–756 (FARLDAFISK) the chain is Cytoplasmic.

This sequence belongs to the RLP family. As to expression, expressed at very low levels in the shoot apex.

It is found in the cell membrane. Its function is as follows. Involved in the perception of CLV3 and CLV3-like peptides, that act as extracellular signals regulating meristems maintenance. Contributes, with WAKL22/RFO1, to resistance to F.oxysporum (f.) matthioli in cv. Columbia relative to cv. Ty-0. The polypeptide is Receptor-like protein 3 (Arabidopsis thaliana (Mouse-ear cress)).